The following is a 73-amino-acid chain: Exodeoxyribonuclease 7 small subunit (73 aa).

This sequence belongs to the XseB family. As to quaternary structure, heterooligomer composed of large and small subunits.

The protein localises to the cytoplasm. The enzyme catalyses Exonucleolytic cleavage in either 5'- to 3'- or 3'- to 5'-direction to yield nucleoside 5'-phosphates.. Functionally, bidirectionally degrades single-stranded DNA into large acid-insoluble oligonucleotides, which are then degraded further into small acid-soluble oligonucleotides. This Clostridium novyi (strain NT) protein is Exodeoxyribonuclease 7 small subunit.